A 398-amino-acid polypeptide reads, in one-letter code: Lysophosphatidylserine lipase ABHD12 (398 aa).

Residues M1–K74 are Cytoplasmic-facing. Residues I75–G95 form a helical membrane-spanning segment. The Extracellular segment spans residues I96–H398. N123 carries N-linked (GlcNAc...) asparagine glycosylation. The active-site Nucleophile is the S246. Residues D333 and H372 each act as charge relay system in the active site.

It belongs to the serine esterase family.

It localises to the endoplasmic reticulum membrane. It carries out the reaction 1-(9Z-octadecenoyl)-sn-glycero-3-phospho-L-serine + H2O = sn-glycero-3-phospho-L-serine + (9Z)-octadecenoate + H(+). It catalyses the reaction 1-(9Z-octadecenoyl)-sn-glycero-3-phospho-(1'-sn-glycerol) + H2O = sn-glycero-3-phospho-(1'-sn-glycerol) + (9Z)-octadecenoate + H(+). The catalysed reaction is 1-(9Z-octadecenoyl)-sn-glycero-3-phospho-(1D-myo-inositol) + H2O = sn-glycero-3-phospho-1D-myo-inositol + (9Z)-octadecenoate + H(+). The enzyme catalyses 1-(9Z-octadecenoyl)-sn-glycero-3-phosphoethanolamine + H2O = sn-glycero-3-phosphoethanolamine + (9Z)-octadecenoate + H(+). It carries out the reaction 1-(9Z-octadecenoyl)-sn-glycero-3-phosphocholine + H2O = 1-(9Z-octadecenoyl)-sn-glycerol + phosphocholine + H(+). It catalyses the reaction 2-(9Z-octadecenoyl)-glycerol + H2O = glycerol + (9Z)-octadecenoate + H(+). The catalysed reaction is 1-hexadecanoyl-sn-glycero-3-phospho-L-serine + H2O = sn-glycero-3-phospho-L-serine + hexadecanoate + H(+). The enzyme catalyses 2-(5Z,8Z,11Z,14Z-eicosatetraenoyl)-glycerol + H2O = glycerol + (5Z,8Z,11Z,14Z)-eicosatetraenoate + H(+). It carries out the reaction Hydrolyzes glycerol monoesters of long-chain fatty acids.. It catalyses the reaction 1-decanoylglycerol + H2O = decanoate + glycerol + H(+). The catalysed reaction is 1-dodecanoylglycerol + H2O = dodecanoate + glycerol + H(+). The enzyme catalyses 1-tetradecanoylglycerol + H2O = tetradecanoate + glycerol + H(+). It carries out the reaction 2-hexadecanoylglycerol + H2O = glycerol + hexadecanoate + H(+). It catalyses the reaction 1-(9Z-octadecenoyl)-glycerol + H2O = glycerol + (9Z)-octadecenoate + H(+). The catalysed reaction is 2-(9Z,12Z-octadecadienoyl)-glycerol + H2O = (9Z,12Z)-octadecadienoate + glycerol + H(+). The enzyme catalyses 1-(5Z,8Z,11Z,14Z-eicosatetraenoyl)-glycerol + H2O = glycerol + (5Z,8Z,11Z,14Z)-eicosatetraenoate + H(+). It carries out the reaction 1-(9Z,12Z-octadecadienoyl)-glycerol + H2O = (9Z,12Z)-octadecadienoate + glycerol + H(+). It catalyses the reaction 1-hexadecanoylglycerol + H2O = glycerol + hexadecanoate + H(+). The catalysed reaction is 1-octadecanoylglycerol + H2O = octadecanoate + glycerol + H(+). The enzyme catalyses 1-octadecanoyl-2-(9,10-epoxyoctadecanoyl)-sn-glycero-3-phospho-L-serine + H2O = 9,10-epoxyoctadecanoate + 1-octadecanoyl-sn-glycero-3-phosphoserine + H(+). It carries out the reaction 1-octadecanoyl-2-(10-hydroxyoctadecanoyl)-sn-glycero-3-phospho-L-serine + H2O = 1-octadecanoyl-sn-glycero-3-phosphoserine + 10-hydroxyoctadecanoate + H(+). It catalyses the reaction 1-hexadecanoyl-2-(10-hydroxyoctadecanoyl)-sn-glycero-3-phospho-L-serine + H2O = 10-hydroxyoctadecanoate + 1-hexadecanoyl-sn-glycero-3-phospho-L-serine + H(+). Its function is as follows. Lysophosphatidylserine (LPS) lipase that mediates the hydrolysis of lysophosphatidylserine, a class of signaling lipids that regulates immunological and neurological processes. Represents a major lysophosphatidylserine lipase in the brain, thereby playing a key role in the central nervous system. Also able to hydrolyze oxidized phosphatidylserine; oxidized phosphatidylserine is produced in response to severe inflammatory stress and constitutes a proapoptotic 'eat me' signal. Also has monoacylglycerol (MAG) lipase activity: hydrolyzes 2-arachidonoylglycerol (2-AG), thereby acting as a regulator of endocannabinoid signaling pathways. Has a strong preference for very-long-chain lipid substrates; substrate specificity is likely due to improved catalysis and not improved substrate binding. This is Lysophosphatidylserine lipase ABHD12 from Macaca fascicularis (Crab-eating macaque).